The following is a 276-amino-acid chain: S-adenosylmethionine decarboxylase proenzyme (276 aa).

Residue serine 126 is the Schiff-base intermediate with substrate; via pyruvic acid of the active site. Position 126 is a pyruvic acid (Ser); by autocatalysis (serine 126). The active-site Proton acceptor; for processing activity is the histidine 131. Cysteine 154 functions as the Proton donor; for catalytic activity in the catalytic mechanism.

The protein belongs to the prokaryotic AdoMetDC family. Type 2 subfamily. In terms of assembly, heterooctamer of four alpha and four beta chains arranged as a tetramer of alpha/beta heterodimers. Requires pyruvate as cofactor. Post-translationally, is synthesized initially as an inactive proenzyme. Formation of the active enzyme involves a self-maturation process in which the active site pyruvoyl group is generated from an internal serine residue via an autocatalytic post-translational modification. Two non-identical subunits are generated from the proenzyme in this reaction, and the pyruvate is formed at the N-terminus of the alpha chain, which is derived from the carboxyl end of the proenzyme. The post-translation cleavage follows an unusual pathway, termed non-hydrolytic serinolysis, in which the side chain hydroxyl group of the serine supplies its oxygen atom to form the C-terminus of the beta chain, while the remainder of the serine residue undergoes an oxidative deamination to produce ammonia and the pyruvoyl group blocking the N-terminus of the alpha chain.

The enzyme catalyses S-adenosyl-L-methionine + H(+) = S-adenosyl 3-(methylsulfanyl)propylamine + CO2. It participates in amine and polyamine biosynthesis; S-adenosylmethioninamine biosynthesis; S-adenosylmethioninamine from S-adenosyl-L-methionine: step 1/1. Its function is as follows. Catalyzes the decarboxylation of S-adenosylmethionine to S-adenosylmethioninamine (dcAdoMet), the propylamine donor required for the synthesis of the polyamines spermine and spermidine from the diamine putrescine. This is S-adenosylmethionine decarboxylase proenzyme from Alcanivorax borkumensis (strain ATCC 700651 / DSM 11573 / NCIMB 13689 / SK2).